The sequence spans 806 residues: Ent-atiserene synthase KSL4, chloroplastic (806 aa).

Residues 1–75 (MGIVALILIK…AKLFKKNEVC (75 aa)) constitute a chloroplast transit peptide. The segment at 33 to 56 (ASLAGSGLPKTTPPKTASLQSHSP) is disordered. The span at 45 to 55 (PPKTASLQSHS) shows a compositional bias: polar residues. The Mg(2+) site is built by Asp556, Asp560, Asn700, and Glu708. The short motif at 556–560 (DDLFD) is the DDXXD motif element.

It belongs to the terpene synthase family. Mg(2+) serves as cofactor. As to expression, highly expressed in leaves, and, at low levels, in roots, stems and flowers.

The protein localises to the plastid. The protein resides in the chloroplast. It carries out the reaction ent-copalyl diphosphate = ent-atiserene + diphosphate. It functions in the pathway secondary metabolite biosynthesis; terpenoid biosynthesis. Involved in the biosynthesis of ent-kaurene diterpenoids natural products such as oridonin, miltiradiene, eriocalyxin B and nezukol, known to exhibit antitumor, anti-inflammatory and antibacterial activities. Catalyzes the conversion of ent-copalyl diphosphate (ent-CPP) to ent-atiserene. This is Ent-atiserene synthase KSL4, chloroplastic from Isodon rubescens (Rabdosia rubescens).